The sequence spans 75 residues: Large ribosomal subunit protein bL31 (75 aa).

This sequence belongs to the bacterial ribosomal protein bL31 family. Type A subfamily. As to quaternary structure, part of the 50S ribosomal subunit.

Binds the 23S rRNA. This is Large ribosomal subunit protein bL31 from Chlorobium phaeobacteroides (strain BS1).